The primary structure comprises 87 residues: HssA/B-like protein 57 (87 aa).

The protein belongs to the hssA/B family.

The polypeptide is HssA/B-like protein 57 (hssl57) (Dictyostelium discoideum (Social amoeba)).